Reading from the N-terminus, the 884-residue chain is Protein argonaute-4 (884 aa).

Residues 242 to 361 enclose the PAZ domain; that stretch reads PVIEFMCEVL…LPLEVCNIVA (120 aa). In terms of domain architecture, Piwi spans 532–843; it reads LIVVILPGKT…VAFRARYHLV (312 aa). A disordered region spans residues 848–870; that stretch reads DSAEGSHVSGQSNGRDPQALAKA.

It belongs to the argonaute family. Ago subfamily.

The protein resides in the cytoplasm. It is found in the P-body. Required for RNA-mediated gene silencing (RNAi). Binds to short RNAs such as microRNAs (miRNAs) and represses the translation of mRNAs which are complementary to them. Lacks endonuclease activity and does not appear to cleave target mRNAs. This chain is Protein argonaute-4 (ago4), found in Xenopus laevis (African clawed frog).